A 353-amino-acid chain; its full sequence is Carbamoyl phosphate synthase arginine-specific small chain (353 aa).

The segment at 1–162 (MEGYLVLEDG…EISTFGDGNK (162 aa)) is CPSase. L-glutamine-binding residues include Ser44, Gly210, and Gly212. The region spanning 163–349 (HIALIDFGYK…LKNVIPARRE (187 aa)) is the Glutamine amidotransferase type-1 domain. Cys237 (nucleophile) is an active-site residue. L-glutamine contacts are provided by Leu238, Gln241, Asn279, and Tyr282. Active-site residues include His322 and Glu324.

Belongs to the CarA family. As to quaternary structure, composed of two chains; the small (or glutamine) chain promotes the hydrolysis of glutamine to ammonia, which is used by the large (or ammonia) chain to synthesize carbamoyl phosphate. Tetramer of heterodimers (alpha,beta)4.

The catalysed reaction is hydrogencarbonate + L-glutamine + 2 ATP + H2O = carbamoyl phosphate + L-glutamate + 2 ADP + phosphate + 2 H(+). The enzyme catalyses L-glutamine + H2O = L-glutamate + NH4(+). It functions in the pathway amino-acid biosynthesis; L-arginine biosynthesis; carbamoyl phosphate from bicarbonate: step 1/1. Small subunit of the glutamine-dependent carbamoyl phosphate synthetase (CPSase). CPSase catalyzes the formation of carbamoyl phosphate from the ammonia moiety of glutamine, carbonate, and phosphate donated by ATP, constituting the first step of the biosynthetic pathway leading to arginine and/or urea. The small subunit (glutamine amidotransferase) binds and cleaves glutamine to supply the large subunit with the substrate ammonia. The sequence is that of Carbamoyl phosphate synthase arginine-specific small chain from Bacillus subtilis (strain 168).